We begin with the raw amino-acid sequence, 238 residues long: MGHEWIDAEREFKWSEDVKVESEVTEIVLVRHGETTWNAAGRIQGQIESDLNEVGLKQAVAIAERLGKEERPVAVYSSDLKRAKDTALMIAKTCFCPEVIEVPDLKERHVGSLQGLYWKEGAEKEPEAYSAFFSSQNDLEIPGGGESFDQLADRSMDALEQIAKKHKGERVIVVTHGGVLRAIYLRITQASSAGKLLNASVNVVHLRDQKWIIDSWSDVSHLSSVGFLQRGFDGDAKP.

The Tele-phosphohistidine intermediate role is filled by His-32. Glu-107 serves as the catalytic Proton donor/acceptor.

It belongs to the phosphoglycerate mutase family.

The catalysed reaction is O-phospho-L-serine + H2O = L-serine + phosphate. It catalyses the reaction O-phospho-D-serine + H2O = D-serine + phosphate. Phosphoglycerate mutase-like protein lacking PGM activity, but having a low metal-independent phosphoserine phosphatase activity in vitro. May be involved in serine biosynthesis. In Arabidopsis thaliana (Mouse-ear cress), this protein is Metal-independent phosphoserine phosphatase (IPSP).